The following is a 187-amino-acid chain: Ponticulin-like protein K (187 aa).

A signal peptide spans 1 to 19 (MKNLILLFLLISIINLIQS). N-linked (GlcNAc...) asparagine glycosylation is found at Asn-31, Asn-70, Asn-86, Asn-93, Asn-119, Asn-128, Asn-146, Asn-160, and Asn-161. Over residues 115–146 (PSPSNSSNPSPSPNTTSSSSLSSSSLNSNEPN) the composition is skewed to low complexity. The tract at residues 115–161 (PSPSNSSNPSPSPNTTSSSSLSSSSLNSNEPNQTTKPPKTNEPQKNN) is disordered. Residues 147–161 (QTTKPPKTNEPQKNN) show a composition bias toward polar residues. Residue Asn-161 is the site of GPI-like-anchor amidated asparagine attachment. Positions 162-187 (STSNIPNFFAIFGFLVLIIFILGDKI) are cleaved as a propeptide — removed in mature form.

This sequence belongs to the ponticulin family. In terms of processing, the GPI-like-anchor contains a phosphoceramide group, rather than a phosphatidyl group.

It localises to the cell membrane. Its function is as follows. Binds F-actin and nucleates actin assembly. This chain is Ponticulin-like protein K (ponK), found in Dictyostelium discoideum (Social amoeba).